A 1559-amino-acid chain; its full sequence is Arginine-glutamic acid dipeptide repeats protein (1559 aa).

The span at 1-36 (MTADKDKDKDKEKDRDRDRDRERDKRDKARESENAR) shows a compositional bias: basic and acidic residues. Positions 1 to 89 (MTADKDKDKD…KKKSRYERTD (89 aa)) are disordered. Phosphoserine occurs at positions 53 and 56. Positions 73-84 (KSRKKPPKKKSR) are enriched in basic residues. Residues 102 to 282 (VVYRPGDCVY…PETRRLNSTQ (181 aa)) form the BAH domain. Position 119 is a phosphothreonine (T119). Phosphoserine occurs at positions 141 and 303. The region spanning 283-386 (GEIRVGPSHQ…KALQRLVKKP (104 aa)) is the ELM2 domain. The 53-residue stretch at 390–442 (LIEKCWTEDEVKRFVKGLRQYGKNFFRIRKELLPNKETGELITFYYYWKKTPE) folds into the SANT domain. Positions 463 to 494 (TRTASTPVNTPSRPPSSEFLDLSSASEDDFDS) are disordered. Over residues 464 to 473 (RTASTPVNTP) the composition is skewed to polar residues. Positions 478-487 (SSEFLDLSSA) are enriched in low complexity. A GATA-type zinc finger spans residues 507 to 532 (RHCFTTTSKDWHHGGRENILLCTDCR). A disordered region spans residues 541–1125 (LPPIEKPVDP…PSHASQSARF (585 aa)). A Glycyl lysine isopeptide (Lys-Gly) (interchain with G-Cter in SUMO2) cross-link involves residue K559. 3 positions are modified to phosphoserine: S593, S599, and S612. Positions 608 to 622 (SGRNSPSAASTSSND) are enriched in low complexity. Basic and acidic residues predominate over residues 623 to 639 (SKAEAVKKSAKKVKEEA). A Glycyl lysine isopeptide (Lys-Gly) (interchain with G-Cter in SUMO2) cross-link involves residue K636. 4 positions are modified to phosphoserine: S641, S655, S674, and S678. Residues 651–672 (EKVASDTEDTDRATSKKTKTQE) are compositionally biased toward basic and acidic residues. The span at 687–707 (SDSRSVNDEGSSDPKDIDQDN) shows a compositional bias: basic and acidic residues. Over residues 708 to 735 (RSTSPSIPSPQDNESDSDSSAQQQMLQT) the composition is skewed to polar residues. Residues 736–761 (QPPALQAPSGAASAPSTAPPGTTQLP) are compositionally biased toward low complexity. The segment covering 768 to 791 (SATTVPPQGSPATSQPPNQTQSTV) has biased composition (polar residues). Residues 805 to 822 (LHPPRLPSPHPPLQPMTA) show a composition bias toward pro residues. Low complexity predominate over residues 890 to 900 (QLPASQSALQP). The segment covering 901–931 (QQPPREQPLPPAPLAMPHIKPPPTTPIPQLP) has biased composition (pro residues). Low complexity predominate over residues 961–971 (KPLSSLSTHHP). A compositionally biased stretch (pro residues) spans 1027–1053 (PQHPFVPGGPPPITPPSCPPTSTPPAG). The segment covering 1054–1068 (PSSSSQPPCSAAVSS) has biased composition (low complexity). S1098, S1105, and S1107 each carry phosphoserine. Over residues 1098 to 1109 (SPPPPPRSPSPE) the composition is skewed to pro residues. T1111 carries the post-translational modification Phosphothreonine. Residues 1148 to 1205 (GSKLAKKREEAIEKAKREAEQKAREEREREKEKEKEREREREREREAERAAQKASSSA) are a coiled coil. The residue at position 1150 (K1150) is an N6-acetyllysine. Basic and acidic residues predominate over residues 1154–1198 (KREEAIEKAKREAEQKAREEREREKEKEKEREREREREREAERAA). The interval 1154 to 1239 (KREEAIEKAK…TTIAAVPPYI (86 aa)) is disordered. Position 1252 is a phosphotyrosine (Y1252). S1259 carries the post-translational modification Phosphoserine.

Interacts with HDAC1 and ATN1. Interaction with ATN1 is improved when the poly-Gln region of ATN1 is extended. In terms of tissue distribution, widely expressed.

Its subcellular location is the nucleus. It localises to the PML body. In terms of biological role, plays a role as a transcriptional repressor during development. May play a role in the control of cell survival. Interacts with FAT1. The protein is Arginine-glutamic acid dipeptide repeats protein (Rere) of Rattus norvegicus (Rat).